Consider the following 128-residue polypeptide: NADH dehydrogenase [ubiquinone] 1 beta subcomplex subunit 6 (128 aa).

Serine 2 carries the post-translational modification N-acetylserine. Position 24 is an N6-acetyllysine (lysine 24). Residues 64–86 (TYRHSIFAFTHVLIPVWIIHYYL) traverse the membrane as a helical segment.

It belongs to the complex I NDUFB6 subunit family. Complex I is composed of 45 different subunits.

The protein resides in the mitochondrion inner membrane. Functionally, accessory subunit of the mitochondrial membrane respiratory chain NADH dehydrogenase (Complex I), that is believed not to be involved in catalysis. Complex I functions in the transfer of electrons from NADH to the respiratory chain. The immediate electron acceptor for the enzyme is believed to be ubiquinone. The chain is NADH dehydrogenase [ubiquinone] 1 beta subcomplex subunit 6 (NDUFB6) from Bos taurus (Bovine).